A 658-amino-acid chain; its full sequence is Threonine--tRNA ligase (658 aa).

The 61-residue stretch at 1 to 61 folds into the TGS domain; it reads MSDVRVIIQR…KDGETVEAVE (61 aa). Residues 259 to 554 form a catalytic region; the sequence is DHRKLGSELD…LLEHYAGAMP (296 aa). Residues C353, H404, and H531 each contribute to the Zn(2+) site.

Belongs to the class-II aminoacyl-tRNA synthetase family. Homodimer. It depends on Zn(2+) as a cofactor.

The protein localises to the cytoplasm. The enzyme catalyses tRNA(Thr) + L-threonine + ATP = L-threonyl-tRNA(Thr) + AMP + diphosphate + H(+). In terms of biological role, catalyzes the attachment of threonine to tRNA(Thr) in a two-step reaction: L-threonine is first activated by ATP to form Thr-AMP and then transferred to the acceptor end of tRNA(Thr). Also edits incorrectly charged L-seryl-tRNA(Thr). This Streptomyces coelicolor (strain ATCC BAA-471 / A3(2) / M145) protein is Threonine--tRNA ligase.